The following is a 141-amino-acid chain: Large ribosomal subunit protein uL11 (141 aa).

Belongs to the universal ribosomal protein uL11 family. Part of the ribosomal stalk of the 50S ribosomal subunit. Interacts with L10 and the large rRNA to form the base of the stalk. L10 forms an elongated spine to which L12 dimers bind in a sequential fashion forming a multimeric L10(L12)X complex. Post-translationally, one or more lysine residues are methylated.

Its function is as follows. Forms part of the ribosomal stalk which helps the ribosome interact with GTP-bound translation factors. The protein is Large ribosomal subunit protein uL11 of Chlorobaculum tepidum (strain ATCC 49652 / DSM 12025 / NBRC 103806 / TLS) (Chlorobium tepidum).